Consider the following 923-residue polypeptide: Protocadherin gamma-B4 (923 aa).

Residues 1–30 form the signal peptide; sequence MGSGAGELGRAERLPVLFLFLLSLFCPALC. 6 consecutive Cadherin domains span residues 31 to 133, 134 to 242, 243 to 345, 346 to 450, 451 to 560, and 568 to 673; these read EQIR…TPKF, TQNS…APVF, SQDV…APEV, IFQS…APVF, SQSS…APRV, and DGSA…LPDI. Residues 31-689 lie on the Extracellular side of the membrane; sequence EQIRYRIPEE…SDLQAELQFY (659 aa). N-linked (GlcNAc...) asparagine glycans are attached at residues N417 and N543. Residues 690-710 traverse the membrane as a helical segment; the sequence is LVVALALISVLFLVAMILAIA. The Cytoplasmic portion of the chain corresponds to 711 to 923; that stretch reads LRLRRSSSPA…KKKSGKKEKK (213 aa). Disordered stretches follow at residues 797–832 and 893–923; these read SHQQAPPNTDWRFSQAQRPGTSGSQNGDDTGTWPNN and ATLTNAAGKRDGKAPAGGNGNKKKSGKKEKK. Residues 913 to 923 are compositionally biased toward basic residues; it reads NKKKSGKKEKK.

The protein resides in the cell membrane. Potential calcium-dependent cell-adhesion protein. May be involved in the establishment and maintenance of specific neuronal connections in the brain. This Homo sapiens (Human) protein is Protocadherin gamma-B4 (PCDHGB4).